Consider the following 259-residue polypeptide: uncharacterized protein (259 aa).

3 disordered regions span residues 22-68, 111-133, and 181-202; these read GLQP…VSFG, REEQKLRKRSRQNDDGSDDDEVE, and LGGKKETEKMPMAARRGMKKKQ. Residues 50-63 show a composition bias toward acidic residues; the sequence is NEEEDAISDMEDKE. Ser127 carries the post-translational modification Phosphoserine.

This is an uncharacterized protein from Schizosaccharomyces pombe (strain 972 / ATCC 24843) (Fission yeast).